Consider the following 260-residue polypeptide: 5'-nucleotidase SurE (260 aa).

A divalent metal cation contacts are provided by aspartate 8, aspartate 9, serine 43, and asparagine 96.

Belongs to the SurE nucleotidase family. A divalent metal cation serves as cofactor.

It is found in the cytoplasm. The enzyme catalyses a ribonucleoside 5'-phosphate + H2O = a ribonucleoside + phosphate. In terms of biological role, nucleotidase that shows phosphatase activity on nucleoside 5'-monophosphates. The polypeptide is 5'-nucleotidase SurE (Ruegeria sp. (strain TM1040) (Silicibacter sp.)).